The primary structure comprises 430 residues: Enolase (430 aa).

Glutamine 162 is a (2R)-2-phosphoglycerate binding site. The active-site Proton donor is glutamate 204. Mg(2+)-binding residues include aspartate 241, glutamate 283, and aspartate 310. (2R)-2-phosphoglycerate is bound by residues lysine 335, arginine 364, serine 365, and lysine 386. Lysine 335 (proton acceptor) is an active-site residue.

Belongs to the enolase family. Mg(2+) is required as a cofactor.

The protein resides in the cytoplasm. It is found in the secreted. The protein localises to the cell surface. The catalysed reaction is (2R)-2-phosphoglycerate = phosphoenolpyruvate + H2O. The protein operates within carbohydrate degradation; glycolysis; pyruvate from D-glyceraldehyde 3-phosphate: step 4/5. In terms of biological role, catalyzes the reversible conversion of 2-phosphoglycerate (2-PG) into phosphoenolpyruvate (PEP). It is essential for the degradation of carbohydrates via glycolysis. The sequence is that of Enolase from Mycobacteroides abscessus (strain ATCC 19977 / DSM 44196 / CCUG 20993 / CIP 104536 / JCM 13569 / NCTC 13031 / TMC 1543 / L948) (Mycobacterium abscessus).